Here is a 1433-residue protein sequence, read N- to C-terminus: DNA polymerase III PolC-type (1433 aa).

The 157-residue stretch at 419 to 575 (FVVFDVETTG…YDAEATGHLL (157 aa)) folds into the Exonuclease domain.

This sequence belongs to the DNA polymerase type-C family. PolC subfamily.

The protein localises to the cytoplasm. It catalyses the reaction DNA(n) + a 2'-deoxyribonucleoside 5'-triphosphate = DNA(n+1) + diphosphate. In terms of biological role, required for replicative DNA synthesis. This DNA polymerase also exhibits 3' to 5' exonuclease activity. The sequence is that of DNA polymerase III PolC-type from Halalkalibacterium halodurans (strain ATCC BAA-125 / DSM 18197 / FERM 7344 / JCM 9153 / C-125) (Bacillus halodurans).